We begin with the raw amino-acid sequence, 466 residues long: Vimentin (466 aa).

The span at 1 to 13 (MSTRSVSSSSYRR) shows a compositional bias: low complexity. The tract at residues 1–31 (MSTRSVSSSSYRRMFGGPGTASRPSSTRSYV) is disordered. N-acetylserine is present on serine 2. A head region spans residues 2–95 (STRSVSSSSY…FSLADAINTE (94 aa)). Serine 5 carries the phosphoserine modification. Serine 7 carries the phosphoserine; by PKA and PKC; alternate modification. The O-linked (GlcNAc) serine; alternate glycan is linked to serine 7. Phosphoserine is present on serine 8. Phosphoserine; by PKC is present on residues serine 9 and serine 10. A Phosphothreonine modification is found at threonine 20. Residue serine 25 is modified to Phosphoserine; by PKA and PKC. The residue at position 26 (serine 26) is a Phosphoserine; by PKC. O-linked (GlcNAc) threonine glycosylation occurs at threonine 33. An O-linked (GlcNAc) serine; alternate glycan is attached at serine 34. Residue serine 34 is modified to Phosphoserine; by PKC; alternate. Serine 39 carries the phosphoserine; by CaMK2, PKA, PKC and ROCK2 modification. The residue at position 42 (serine 42) is a Phosphoserine; by PKC. Serine 49 carries the post-translational modification Phosphoserine. A Phosphotyrosine modification is found at tyrosine 53. A Phosphoserine modification is found at serine 55. A Phosphoserine; by CDK5 and CDK1 modification is found at serine 56. Tyrosine 61 carries the phosphotyrosine modification. Serine 66 is subject to Phosphoserine; by PKA and PKC. Phosphoserine; by AURKB and ROCK2 is present on serine 72. Residue serine 83 is modified to Phosphoserine; by CaMK2. Serine 87 carries the post-translational modification Phosphoserine. The tract at residues 96 to 131 (FKNTRTNEKVELQELNDRFANYIDKVRFLEQQNKIL) is coil 1A. Residues 96 to 131 (FKNTRTNEKVELQELNDRFANYIDKVRFLEQQNKIL) are a coiled coil. An IF rod domain is found at 103-411 (EKVELQELND…KLLEGEESRI (309 aa)). A Glycyl lysine isopeptide (Lys-Gly) (interchain with G-Cter in SUMO2) cross-link involves residue lysine 104. The residue at position 117 (tyrosine 117) is a Phosphotyrosine. N6-acetyllysine; alternate is present on residues lysine 120, lysine 129, and lysine 139. 2 positions are modified to N6-succinyllysine; alternate: lysine 120 and lysine 129. Residues lysine 120, lysine 129, and lysine 139 each participate in a glycyl lysine isopeptide (Lys-Gly) (interchain with G-Cter in SUMO2); alternate cross-link. Residues 132–153 (LAELEQLKGQGKSRLGDLYEEE) are linker 1. Position 144 is a phosphoserine (serine 144). Positions 154 to 245 (MRELRRQVDQ…KLHDEEIQEL (92 aa)) form a coiled coil. A coil 1B region spans residues 154 to 245 (MRELRRQVDQ…KLHDEEIQEL (92 aa)). Lysine 168 carries the post-translational modification N6-acetyllysine. Lysine 188 is modified (N6-acetyllysine; alternate). Residue lysine 188 is modified to N6-succinyllysine; alternate. A Phosphoserine modification is found at serine 214. Lysine 223 carries the N6-acetyllysine; alternate modification. A Glycyl lysine isopeptide (Lys-Gly) (interchain with G-Cter in SUMO2); alternate cross-link involves residue lysine 223. Serine 226 bears the Phosphoserine mark. The residue at position 235 (lysine 235) is an N6-acetyllysine. The linker 12 stretch occupies residues 246-268 (QAQIQEQHVQIDMDVSKPDLTAA). Lysine 262 is covalently cross-linked (Glycyl lysine isopeptide (Lys-Gly) (interchain with G-Cter in SUMO2)). The coil 2 stretch occupies residues 269–407 (LRDVRQQYES…ATYRKLLEGE (139 aa)). Lysine 294 carries the post-translational modification N6-acetyllysine; alternate. Residue lysine 294 is modified to N6-succinyllysine; alternate. A Glycyl lysine isopeptide (Lys-Gly) (interchain with G-Cter in SUMO2); alternate cross-link involves residue lysine 294. A Phosphoserine modification is found at serine 299. Residues 303–407 (NRNNDALRQA…ATYRKLLEGE (105 aa)) are a coiled coil. Lysine 313 is covalently cross-linked (Glycyl lysine isopeptide (Lys-Gly) (interchain with G-Cter in SUMO2)). The [IL]-x-C-x-x-[DE] motif signature appears at 326 to 329 (LTCE). Lysine 373 is subject to N6-acetyllysine; alternate. Residue lysine 373 forms a Glycyl lysine isopeptide (Lys-Gly) (interchain with G-Cter in SUMO2); alternate linkage. The interval 408 to 466 (ESRISLPLPNFSSLNLRETNLDSLPLVDTHSKRTLLIKTVETRDGQVINETSQHHDDLE) is tail. 4 positions are modified to phosphoserine: serine 409, serine 412, serine 419, and serine 420. The residue at position 426 (threonine 426) is a Phosphothreonine. Serine 430 carries the post-translational modification Phosphoserine. Threonine 436 carries the post-translational modification Phosphothreonine. Phosphoserine is present on serine 438. Residue lysine 439 forms a Glycyl lysine isopeptide (Lys-Gly) (interchain with G-Cter in SUMO2) linkage. Lysine 445 carries the N6-acetyllysine; alternate modification. At lysine 445 the chain carries N6-succinyllysine; alternate. Lysine 445 participates in a covalent cross-link: Glycyl lysine isopeptide (Lys-Gly) (interchain with G-Cter in SUMO2); alternate. Lysine 445 participates in a covalent cross-link: Glycyl lysine isopeptide (Lys-Gly) (interchain with G-Cter in SUMO1); alternate. Threonine 446 and threonine 458 each carry phosphothreonine. Serine 459 carries the post-translational modification Phosphoserine.

Belongs to the intermediate filament family. As to quaternary structure, homomer assembled from elementary dimers. Identified in complexes that contain VIM, EZR, AHNAK, BFSP1, BFSP2, ANK2, PLEC, PRX and spectrin. Interacts with BCAS3. Interacts with LGSN. Interacts with SYNM. Interacts (via rod region) with PLEC (via CH 1 domain). Interacts with STK33. Interacts with LARP6. Interacts with RAB8B. Interacts with TOR1A; the interaction associates TOR1A with the cytoskeleton. Interacts with TOR1AIP1. Interacts with TOR1AIP1. Interacts with DIAPH1. Interacts with EPPK1; interaction is dependent of higher-order structure of intermediate filament. Interacts with the non-receptor tyrosine kinase SRMS; the interaction leads to phosphorylation of VIM. Interacts with NOD2. Interacts (via head region) with CORO1C. Interacts with HDGF. Interacts with PRKCE (via phorbol-ester/DAG-type 2 domain). Interacts with BFSP2. Interacts with PPL. Interacts with PKP1 and PKP2. Interacts with SCRIB (via PDZ domains); the interaction protects SCRIB from proteasomal degradation and facilitates SCRIB localization to intermediate filaments, the interaction is reduced by cell contact inhibition. Post-translationally, one of the most prominent phosphoproteins in various cells of mesenchymal origin. Phosphorylation is enhanced during cell division, at which time vimentin filaments are significantly reorganized. Phosphorylation by PKN1 inhibits the formation of filaments. Filament disassembly during mitosis is promoted by phosphorylation at Ser-55 as well as by nestin. Phosphorylated at Ser-56 by CDK5 during neutrophil secretion in the cytoplasm. Phosphorylated by STK33. Phosphorylated on tyrosine residues by SRMS. S-nitrosylation is induced by interferon-gamma and oxidatively-modified low-densitity lipoprotein (LDL(ox)) possibly implicating the iNOS-S100A8/9 transnitrosylase complex.

Its subcellular location is the cytoplasm. It localises to the cytoskeleton. It is found in the nucleus matrix. The protein localises to the cell membrane. Functionally, vimentins are class-III intermediate filaments found in various non-epithelial cells, especially mesenchymal cells. Vimentin is attached to the nucleus, endoplasmic reticulum, and mitochondria, either laterally or terminally. Plays a role in cell directional movement, orientation, cell sheet organization and Golgi complex polarization at the cell migration front. Protects SCRIB from proteasomal degradation and facilitates its localization to intermediate filaments in a cell contact-mediated manner. Involved with LARP6 in the stabilization of type I collagen mRNAs for CO1A1 and CO1A2. This chain is Vimentin (VIM), found in Bos taurus (Bovine).